The following is a 348-amino-acid chain: Uroporphyrinogen decarboxylase (348 aa).

Residues arginine 27 to arginine 31, phenylalanine 46, aspartate 76, tyrosine 152, serine 207, and histidine 320 contribute to the substrate site.

Belongs to the uroporphyrinogen decarboxylase family. As to quaternary structure, homodimer.

It is found in the cytoplasm. The enzyme catalyses uroporphyrinogen III + 4 H(+) = coproporphyrinogen III + 4 CO2. It functions in the pathway porphyrin-containing compound metabolism; protoporphyrin-IX biosynthesis; coproporphyrinogen-III from 5-aminolevulinate: step 4/4. Catalyzes the decarboxylation of four acetate groups of uroporphyrinogen-III to yield coproporphyrinogen-III. This is Uroporphyrinogen decarboxylase from Bacillus cereus (strain G9842).